Here is a 1088-residue protein sequence, read N- to C-terminus: MGTSQAFLVLSCLLTGPSLIVCQLLLPSILPNENEKIVPLSSSFSLRCFGESEVSWQHPMSEEEDPNVEIRTEENNSSLFVTVLEVVNASAAHTGWYTCYYNHTQTEESEIEGRHIYIYVPDPDMAFVPLGMTDSLVIVEEDDSAIIPCLTTDPDTEVTLHNNGRLVPASYDSRQGFNGTFSVGPYICEATVRGRTFKTSEFNVYALKATSELNLEMDTRQTVYKAGETIVVTCAVFNNEVVDLQWTYPGEVRNKGITMLEEIKLPSIKLVYTLTVPKATVKDSGDYECAARQATKEVKEMKTVTISVHEKGFVQIRPTFGHLETVNLHQVREFVVEVQAYPTPRISWLKDNLTLIENLTEITTDVQRSQETRYQSKLKLIRAKEEDSGHYTIIVQNDDDMKSYTFELSTLVPASILELVDDHHGSGGGQTVRCTAEGTPLPNIEWMICKDIKKCNNDTSWTVLASNVSNIITEFHQRGRSTVEGRVSFAKVEETIAVRCLAKNDLGIGNRELKLVAPSLRSELTVAAAVLVLLVIVIVSLIVLVVIWKQKPRYEIRWRVIESISPDGHEYIYVDPMQLPYDSRWEFPRDGLVLGRILGSGAFGKVVEGTAYGLSRSQPVMKVAVKMLKPTARSSEKQALMSELKIMTHLGPHLNIVNLLGACTKSGPIYIITEYCFYGDLVNYLHKNRDSFMSRHPEKPKKDLDIFGLNPADESTRSYVILSFENNGDYVDMKQADTTQYVPMLERKEVSKYSDIQRSLYDRPASYKKKSMLDSEAKNLLSDDDSEGLTLLDLLSFTYQVARGMEFLASKNCVHRDLAARNVLLAQGKIVKICDFGLARDIMHDSNYVSKGSTFLPVKWMAPESIFDNLYTTLSDVWSYGVLLWEIFSLGGTPYPGMMVDSTFYNKIKSGYRMAKPDHATSEVYEIMVQCWNSEPEKRPSFYHLSEIVENLLPGQYKKSYEKIHLDFLKSDHPAVARMRVDSDNAYIGVTYKNEEDKLKEWEGGLDEQRLSADSGYIIPLPDIDPVPEEEDLGKRNRHSSQTSEESAIETGSSSSTFIKREDETIEDIDMMDDIGIDSSDLVEDSFL.

The signal sequence occupies residues 1 to 23 (MGTSQAFLVLSCLLTGPSLIVCQ). Ig-like C2-type domains lie at 24–112 (LLLP…SEIE), 116–200 (IYIY…FKTS), 201–305 (EFNV…KTVT), 318–409 (PTFG…FELS), and 413–516 (PASI…LKLV). The Extracellular portion of the chain corresponds to 24-527 (LLLPSILPNE…PSLRSELTVA (504 aa)). C48 and C99 are joined by a disulfide. N-linked (GlcNAc...) asparagine glycosylation is found at N75, N102, and N178. 2 disulfide bridges follow: C149–C188 and C234–C289. 4 N-linked (GlcNAc...) asparagine glycosylation sites follow: N352, N358, N457, and N467. Residues C434 and C500 are joined by a disulfide bond. Residues 528 to 548 (AAVLVLLVIVIVSLIVLVVIW) form a helical membrane-spanning segment. Topologically, residues 549–1088 (KQKPRYEIRW…SSDLVEDSFL (540 aa)) are cytoplasmic. 2 positions are modified to phosphotyrosine; by autocatalysis: Y571 and Y573. Residues 592–953 (LVLGRILGSG…HLSEIVENLL (362 aa)) form the Protein kinase domain. ATP is bound by residues 598-606 (LGSGAFGKV) and K626. A phosphotyrosine; by autocatalysis mark is found at Y719, Y730, Y741, Y753, Y761, and Y767. The active-site Proton acceptor is D817. Phosphotyrosine; by autocatalysis occurs at positions 848, 987, and 1017. The tract at residues 1017–1088 (YIIPLPDIDP…SSDLVEDSFL (72 aa)) is disordered. Polar residues predominate over residues 1040–1058 (SSQTSEESAIETGSSSSTF). The span at 1064–1088 (ETIEDIDMMDDIGIDSSDLVEDSFL) shows a compositional bias: acidic residues.

This sequence belongs to the protein kinase superfamily. Tyr protein kinase family. CSF-1/PDGF receptor subfamily. In terms of assembly, interacts with homodimeric PDGFA, PDGFB and PDGFC, and with heterodimers formed by PDGFA and PDGFB. Monomer in the absence of bound ligand. Interaction with dimeric PDGFA, PDGFB and/or PDGFC leads to receptor dimerization, where both PDGFRA homodimers and heterodimers with PDGFRB are observed. Interacts (tyrosine phosphorylated) with SHB (via SH2 domain). Interacts (tyrosine phosphorylated) with SHF (via SH2 domain). Interacts (tyrosine phosphorylated) with SRC (via SH2 domain). Interacts (tyrosine phosphorylated) with PIK3R1. Interacts (tyrosine phosphorylated) with PLCG1 (via SH2 domain). Interacts (tyrosine phosphorylated) with CRK, GRB2 and GRB7. Interacts with CD248; this interaction promotes PDGF receptor signaling pathway. In terms of processing, ubiquitinated, leading to its internalization and degradation. Post-translationally, autophosphorylated on tyrosine residues upon ligand binding. Autophosphorylation occurs in trans, i.e. one subunit of the dimeric receptor phosphorylates tyrosine residues on the other subunit. Phosphorylation at Tyr-730 and Tyr-741 is important for interaction with PIK3R1. Phosphorylation at Tyr-719 and Tyr-753 is important for interaction with PTPN11. Phosphorylation at Tyr-761 is important for interaction with CRK. Phosphorylation at Tyr-571 and Tyr-573 is important for interaction with SRC and SRC family members. Phosphorylation at Tyr-987 and Tyr-1017 is important for interaction with PLCG1.

The protein localises to the cell membrane. It localises to the cell projection. Its subcellular location is the cilium. It is found in the golgi apparatus. The catalysed reaction is L-tyrosyl-[protein] + ATP = O-phospho-L-tyrosyl-[protein] + ADP + H(+). With respect to regulation, present in an inactive conformation in the absence of bound ligand. Binding of PDGFA and/or PDGFB leads to dimerization and activation by autophosphorylation on tyrosine residues. Inhibited by imatinib, nilotinib and sorafenib. Tyrosine-protein kinase that acts as a cell-surface receptor for PDGFA, PDGFB and PDGFC and plays an essential role in the regulation of embryonic development, cell proliferation, survival and chemotaxis. Depending on the context, promotes or inhibits cell proliferation and cell migration. Plays an important role in the differentiation of bone marrow-derived mesenchymal stem cells. Required for normal skeleton development and cephalic closure during embryonic development. Required for normal development of the mucosa lining the gastrointestinal tract, and for recruitment of mesenchymal cells and normal development of intestinal villi. Plays a role in cell migration and chemotaxis in wound healing. Plays a role in platelet activation, secretion of agonists from platelet granules, and in thrombin-induced platelet aggregation. Binding of its cognate ligands - homodimeric PDGFA, homodimeric PDGFB, heterodimers formed by PDGFA and PDGFB or homodimeric PDGFC -leads to the activation of several signaling cascades; the response depends on the nature of the bound ligand and is modulated by the formation of heterodimers between PDGFRA and PDGFRB. Phosphorylates PIK3R1, PLCG1, and PTPN11. Activation of PLCG1 leads to the production of the cellular signaling molecules diacylglycerol and inositol 1,4,5-trisphosphate, mobilization of cytosolic Ca(2+) and the activation of protein kinase C. Phosphorylates PIK3R1, the regulatory subunit of phosphatidylinositol 3-kinase, and thereby mediates activation of the AKT1 signaling pathway. Mediates activation of HRAS and of the MAP kinases MAPK1/ERK2 and/or MAPK3/ERK1. Promotes activation of STAT family members STAT1, STAT3 and STAT5A and/or STAT5B. Receptor signaling is down-regulated by protein phosphatases that dephosphorylate the receptor and its down-stream effectors, and by rapid internalization of the activated receptor. In Rattus norvegicus (Rat), this protein is Platelet-derived growth factor receptor alpha (Pdgfra).